We begin with the raw amino-acid sequence, 94 residues long: Integration host factor subunit beta (94 aa).

This sequence belongs to the bacterial histone-like protein family. Heterodimer of an alpha and a beta chain.

In terms of biological role, this protein is one of the two subunits of integration host factor, a specific DNA-binding protein that functions in genetic recombination as well as in transcriptional and translational control. This is Integration host factor subunit beta from Histophilus somni (strain 129Pt) (Haemophilus somnus).